A 503-amino-acid polypeptide reads, in one-letter code: Zinc metalloproteinase nas-14 (503 aa).

The first 25 residues, methionine 1–proline 25, serve as a signal peptide directing secretion. In terms of domain architecture, Peptidase M12A spans asparagine 116–glycine 312. 2 cysteine pairs are disulfide-bonded: cysteine 158–cysteine 311 and cysteine 182–cysteine 202. The N-linked (GlcNAc...) asparagine glycan is linked to asparagine 192. Residue histidine 210 participates in Zn(2+) binding. Glutamate 211 is a catalytic residue. 2 residues coordinate Zn(2+): histidine 214 and histidine 220. Residues threonine 317 to threonine 340 are compositionally biased toward low complexity. Residues threonine 317 to asparagine 377 form a disordered region. Basic and acidic residues predominate over residues valine 342–valine 351. The segment covering serine 352–lysine 370 has biased composition (low complexity). Cystine bridges form between cysteine 380-cysteine 414, cysteine 387-cysteine 407, and cysteine 396-cysteine 411. The ShKT 1 domain maps to cysteine 380–cysteine 414. Residues threonine 422 to alanine 464 form a disordered region. N-linked (GlcNAc...) asparagine glycosylation is present at asparagine 437. Positions serine 439–alanine 464 are enriched in low complexity. Cystine bridges form between cysteine 469-cysteine 503, cysteine 476-cysteine 496, and cysteine 485-cysteine 500. The region spanning cysteine 469–cysteine 503 is the ShKT 2 domain.

The cofactor is Zn(2+). In terms of tissue distribution, expressed in pharyngeal muscles and mc cells.

It is found in the secreted. Functionally, metalloprotease. This Caenorhabditis elegans protein is Zinc metalloproteinase nas-14 (nas-14).